The sequence spans 505 residues: Beta-agarase (505 aa).

An N-terminal signal peptide occupies residues 1 to 23; that stretch reads MLKVIPWLLVTSSLVAIPTYIHA. Glu200 functions as the Proton donor in the catalytic mechanism. Residue Glu322 is the Nucleophile of the active site.

Belongs to the glycosyl hydrolase 86 family.

Its subcellular location is the secreted. The catalysed reaction is Hydrolysis of (1-&gt;4)-beta-D-galactosidic linkages in agarose, giving the tetramer as the predominant product.. Hydrolase that cleaves agar at the (1-&gt;4) linkage, producing tetrameric saccharide molecules. Is specific for agar and agarose and does not digest alginate or carrageenan. This Pseudoalteromonas atlantica (Alteromonas atlantica) protein is Beta-agarase.